The primary structure comprises 734 residues: Photosystem I P700 chlorophyll a apoprotein A2 (734 aa).

Transmembrane regions (helical) follow at residues 46–69 (IFAS…FHVA), 135–158 (LYTG…LHLQ), 175–199 (LNHH…HVAI), 273–291 (IAHH…GHMY), 330–353 (LHFQ…QHMY), 369–395 (AALY…IFFI), 417–439 (AIIS…LYVH), and 517–535 (FLVH…LILV). [4Fe-4S] cluster is bound by residues Cys559 and Cys568. The next 2 helical transmembrane spans lie at 575 to 596 (AFYL…YWHW) and 643 to 665 (LSVW…MFLI). Chlorophyll a-binding residues include His654, Met662, and Tyr670. Trp671 is a phylloquinone binding site. A helical transmembrane segment spans residues 707-727 (LVGLAHFSVGYIFTYAAFLIA).

The protein belongs to the PsaA/PsaB family. As to quaternary structure, the PsaA/B heterodimer binds the P700 chlorophyll special pair and subsequent electron acceptors. PSI consists of a core antenna complex that captures photons, and an electron transfer chain that converts photonic excitation into a charge separation. The eukaryotic PSI reaction center is composed of at least 11 subunits. P700 is a chlorophyll a/chlorophyll a' dimer, A0 is one or more chlorophyll a, A1 is one or both phylloquinones and FX is a shared 4Fe-4S iron-sulfur center. is required as a cofactor.

Its subcellular location is the plastid. The protein localises to the chloroplast thylakoid membrane. It carries out the reaction reduced [plastocyanin] + hnu + oxidized [2Fe-2S]-[ferredoxin] = oxidized [plastocyanin] + reduced [2Fe-2S]-[ferredoxin]. Its function is as follows. PsaA and PsaB bind P700, the primary electron donor of photosystem I (PSI), as well as the electron acceptors A0, A1 and FX. PSI is a plastocyanin-ferredoxin oxidoreductase, converting photonic excitation into a charge separation, which transfers an electron from the donor P700 chlorophyll pair to the spectroscopically characterized acceptors A0, A1, FX, FA and FB in turn. Oxidized P700 is reduced on the lumenal side of the thylakoid membrane by plastocyanin. This Piper cenocladum (Ant piper) protein is Photosystem I P700 chlorophyll a apoprotein A2.